A 404-amino-acid chain; its full sequence is Cysteine desulfurase IscS (404 aa).

Residues 75-76 (AT), asparagine 155, glutamine 183, and 203-205 (SGH) each bind pyridoxal 5'-phosphate. N6-(pyridoxal phosphate)lysine is present on lysine 206. Residue threonine 243 coordinates pyridoxal 5'-phosphate. The active-site Cysteine persulfide intermediate is the cysteine 328. Cysteine 328 contacts [2Fe-2S] cluster.

This sequence belongs to the class-V pyridoxal-phosphate-dependent aminotransferase family. NifS/IscS subfamily. As to quaternary structure, homodimer. Forms a heterotetramer with IscU, interacts with other sulfur acceptors. The cofactor is pyridoxal 5'-phosphate.

Its subcellular location is the cytoplasm. It catalyses the reaction (sulfur carrier)-H + L-cysteine = (sulfur carrier)-SH + L-alanine. The protein operates within cofactor biosynthesis; iron-sulfur cluster biosynthesis. Its function is as follows. Master enzyme that delivers sulfur to a number of partners involved in Fe-S cluster assembly, tRNA modification or cofactor biosynthesis. Catalyzes the removal of elemental sulfur atoms from cysteine to produce alanine. Functions as a sulfur delivery protein for Fe-S cluster synthesis onto IscU, an Fe-S scaffold assembly protein, as well as other S acceptor proteins. The chain is Cysteine desulfurase IscS from Shewanella sp. (strain ANA-3).